A 206-amino-acid chain; its full sequence is Ras-related protein Rab-18 (206 aa).

GTP is bound by residues Ser-17, Gly-20, Lys-21, Ser-22, Ser-23, Asp-34, Pro-35, Thr-40, Gly-66, Lys-123, Asp-125, and Ala-152. Position 22 (Ser-22) interacts with Mg(2+). Short sequence motifs (switch) lie at residues 31-45 and 63-80; these read DTFD…GVDF and DTAG…YYRG. Residue Thr-40 coordinates Mg(2+). Cys-199 carries S-palmitoyl cysteine lipidation. Cys-203 is subject to Cysteine methyl ester. Cys-203 carries the S-geranylgeranyl cysteine lipid modification. Positions 204–206 are cleaved as a propeptide — removed in mature form; the sequence is SML.

The protein belongs to the small GTPase superfamily. Rab family. Mg(2+) is required as a cofactor.

Its subcellular location is the endoplasmic reticulum membrane. The protein localises to the golgi apparatus. The protein resides in the cis-Golgi network membrane. It is found in the lipid droplet. It localises to the apical cell membrane. The enzyme catalyses GTP + H2O = GDP + phosphate + H(+). With respect to regulation, regulated by guanine nucleotide exchange factors (GEFs) which promote the exchange of bound GDP for free GTP. Regulated by GTPase activating proteins (GAPs) which increase the GTP hydrolysis activity at the ER membrane. Inhibited by GDP dissociation inhibitors (GDIs) which prevent Rab-GDP dissociation. Its function is as follows. The small GTPases Rab are key regulators of intracellular membrane trafficking, from the formation of transport vesicles to their fusion with membranes. Rabs cycle between an inactive GDP-bound form and an active GTP-bound form that is able to recruit to membranes different sets of downstream effectors directly responsible for vesicle formation, movement, tethering and fusion. RAB18 is required for the localization of ZFYVE1 to lipid droplets and for its function in mediating the formation of endoplasmic reticulum-lipid droplets (ER-LD) contacts. Also required for maintaining endoplasmic reticulum structure. Plays a role in apical endocytosis/recycling. Plays a key role in eye and brain development and neurodegeneration. In Gallus gallus (Chicken), this protein is Ras-related protein Rab-18 (RAB18).